The following is a 142-amino-acid chain: 3-hydroxyacyl-[acyl-carrier-protein] dehydratase FabZ (142 aa).

His46 is a catalytic residue.

It belongs to the thioester dehydratase family. FabZ subfamily.

The protein localises to the cytoplasm. The catalysed reaction is a (3R)-hydroxyacyl-[ACP] = a (2E)-enoyl-[ACP] + H2O. Involved in unsaturated fatty acids biosynthesis. Catalyzes the dehydration of short chain beta-hydroxyacyl-ACPs and long chain saturated and unsaturated beta-hydroxyacyl-ACPs. The chain is 3-hydroxyacyl-[acyl-carrier-protein] dehydratase FabZ from Thermus thermophilus (strain ATCC BAA-163 / DSM 7039 / HB27).